The sequence spans 203 residues: MKLWMRKTLVVLFTIVTFGLVSPPAALMADKPSGQPSSLEQNDYTAFYDEHDLYDDESDDRRDPELLFQSYKEQLLDSAEDQSFLKFGSRIAPVIEDDYRKEILPKIENVISDYLATLQDDEAYQDVVISSMPSAGKTEKIFNVYNRTTGEDLLRFHVRRDHPPHDGYWFNFHYHTAEDGFQSHHELGSIYWDRNTPPNWMSA.

The helical transmembrane segment at 9–29 (LVVLFTIVTFGLVSPPAALMA) threads the bilayer.

The protein resides in the membrane. This is an uncharacterized protein from Bacillus subtilis (strain 168).